The chain runs to 594 residues: Aspartate--tRNA(Asp/Asn) ligase (594 aa).

An L-aspartate-binding site is contributed by Glu-175. The segment at 199–202 (QQLK) is aspartate. Arg-221 provides a ligand contact to L-aspartate. ATP is bound by residues 221 to 223 (RDE) and Gln-230. His-450 provides a ligand contact to L-aspartate. Glu-485 contacts ATP. Position 492 (Arg-492) interacts with L-aspartate. 537 to 540 (GIDR) contacts ATP.

The protein belongs to the class-II aminoacyl-tRNA synthetase family. Type 1 subfamily. Homodimer.

It localises to the cytoplasm. It carries out the reaction tRNA(Asx) + L-aspartate + ATP = L-aspartyl-tRNA(Asx) + AMP + diphosphate. Aspartyl-tRNA synthetase with relaxed tRNA specificity since it is able to aspartylate not only its cognate tRNA(Asp) but also tRNA(Asn). Reaction proceeds in two steps: L-aspartate is first activated by ATP to form Asp-AMP and then transferred to the acceptor end of tRNA(Asp/Asn). The polypeptide is Aspartate--tRNA(Asp/Asn) ligase (Herpetosiphon aurantiacus (strain ATCC 23779 / DSM 785 / 114-95)).